A 433-amino-acid polypeptide reads, in one-letter code: Putative wall-associated receptor kinase-like 16 (433 aa).

A signal peptide spans 1 to 22; the sequence is MKLQHVVYLVAIFFVVAIFVIA. The Extracellular portion of the chain corresponds to 23 to 29; the sequence is CIEENKY. The chain crosses the membrane as a helical span at residues 30–50; sequence LVWIMIILANTTNILSLVRSI. The Cytoplasmic segment spans residues 51 to 433; that stretch reads SYIKNIRKHQ…VARFDIEAGR (383 aa). Thr-97 carries the phosphothreonine modification. Residues 108–391 form the Protein kinase domain; sequence YDVSRILGQG…RAKTTKHNWL (284 aa). Residues 114–122 and Lys-136 each bind ATP; that span reads LGQGGQWTV. Tyr-181 carries the post-translational modification Phosphotyrosine. The active-site Proton acceptor is the Asp-233. 2 positions are modified to phosphothreonine: Thr-267 and Thr-272. Tyr-280 carries the phosphotyrosine modification.

The protein belongs to the protein kinase superfamily. Ser/Thr protein kinase family.

It localises to the membrane. It catalyses the reaction L-seryl-[protein] + ATP = O-phospho-L-seryl-[protein] + ADP + H(+). The enzyme catalyses L-threonyl-[protein] + ATP = O-phospho-L-threonyl-[protein] + ADP + H(+). Putative serine/threonine-protein kinase that may function as a signaling receptor of extracellular matrix component. This chain is Putative wall-associated receptor kinase-like 16 (WAKL16), found in Arabidopsis thaliana (Mouse-ear cress).